The following is a 347-amino-acid chain: Ribosomal RNA large subunit methyltransferase M (347 aa).

S-adenosyl-L-methionine contacts are provided by residues Ser184, 217 to 220 (APGG), Asp236, Asp256, and Asp272. Catalysis depends on Lys301, which acts as the Proton acceptor.

This sequence belongs to the class I-like SAM-binding methyltransferase superfamily. RNA methyltransferase RlmE family. RlmM subfamily. Monomer.

The protein localises to the cytoplasm. The catalysed reaction is cytidine(2498) in 23S rRNA + S-adenosyl-L-methionine = 2'-O-methylcytidine(2498) in 23S rRNA + S-adenosyl-L-homocysteine + H(+). Its function is as follows. Catalyzes the 2'-O-methylation at nucleotide C2498 in 23S rRNA. The sequence is that of Ribosomal RNA large subunit methyltransferase M from Xanthomonas oryzae pv. oryzae (strain KACC10331 / KXO85).